Consider the following 188-residue polypeptide: COMM domain-containing protein 1 (188 aa).

A sufficient for interaction with SLC12A2 region spans residues 1–122 (MAAELEGSKA…RWDSGLRGLS (122 aa)). Positions 100, 109, and 133 each coordinate Cu cation. The region spanning 117-185 (GLRGLSWRVD…EVEESISTLM (69 aa)) is the COMM domain. The interval 124-188 (RVDGKSQSRH…ESISTLMQPA (65 aa)) is required for binding to PtdIns(4,5)P2.

Belongs to the COMM domain-containing protein 1 family. As to quaternary structure, component of the commander complex consisting of the CCC subcomplex and the retriever subcomplex. Component of the CCC (COMMD/CCDC22/CCDC93) subcomplex consisting of COMMD1, COMMD2, COMMD3, COMMD4, COMMD5, COMMD6, COMMD7, COMMD8, COMMD9, COMMD10, CCDC22 and CCDC93; within the complex forms a heterodimer with COMMD6. Interacts with VPS35L; the interaction associates the CCC complex with the retriever complex. Identified in a complex with an E3 ubiquitin ligase complex composed of TCEB1/elongin C, CUL2, SOCS1 and RBX1; in the complex interacts directly with SOCS1 and CUL2. Identified in a complex with NF-kappa-B. Interacts directly with SLC12A2. Interacts directly with ATP7B (via the N-terminal region). Interacts with ATP7A. Interacts with FAM107A; this interaction stabilizes COMMD1 in the nucleus. Interacts with CCS, CDKN2A, RELA, REL, RELB, NFKB1/p105, NFKB2/p100, NFKBIB, SCNN1D, SCNN1B, CFTR, CLU, SGK1, AKT1, CUL1, CUL2, CUL3, CUL4A, CUL4B, CUL5, CUL7, HIF1A. In terms of processing, ubiquitinated; undergoes both 'Lys-63'- and 'Lys-48'-linked polyubiquitination. Ubiquitinated by XIAP, leading to its proteasomal degradation.

The protein localises to the nucleus. It localises to the cytoplasm. Its subcellular location is the endosome membrane. It is found in the cytoplasmic vesicle. The protein resides in the early endosome. The protein localises to the recycling endosome. Functionally, scaffold protein in the commander complex that is essential for endosomal recycling of transmembrane cargos; the commander complex is composed of the CCC subcomplex and the retriever subcomplex. Can modulate activity of cullin-RING E3 ubiquitin ligase (CRL) complexes by displacing CAND1; in vitro promotes CRL E3 activity and dissociates CAND1 from CUL1 and CUL2. Promotes ubiquitination of NF-kappa-B subunit RELA and its subsequent proteasomal degradation. Down-regulates NF-kappa-B activity. Involved in the regulation of membrane expression and ubiquitination of SLC12A2. Modulates Na(+) transport in epithelial cells by regulation of apical cell surface expression of amiloride-sensitive sodium channel (ENaC) subunits and by promoting their ubiquitination presumably involving NEDD4L. Promotes the localization of SCNN1D to recycling endosomes. Promotes CFTR cell surface expression through regulation of its ubiquitination. Down-regulates SOD1 activity by interfering with its homodimerization. Plays a role in copper ion homeostasis. Involved in copper-dependent ATP7A trafficking between the trans-Golgi network and vesicles in the cell periphery; the function is proposed to depend on its association within the CCC complex and cooperation with the WASH complex on early endosomes. Can bind one copper ion per monomer. May function to facilitate biliary copper excretion within hepatocytes. Binds to phosphatidylinositol 4,5-bisphosphate (PtdIns(4,5)P2). Involved in the regulation of HIF1A-mediated transcription; competes with ARNT/Hif-1-beta for binding to HIF1A resulting in decreased DNA binding and impaired transcriptional activation by HIF-1. Negatively regulates neuroblastoma G1/S phase cell cycle progression and cell proliferation by stimulating ubiquitination of NF-kappa-B subunit RELA and NF-kappa-B degradation in a FAM107A- and actin-dependent manner. This is COMM domain-containing protein 1 (COMMD1) from Canis lupus familiaris (Dog).